The sequence spans 404 residues: GID complex subunit 9 (404 aa).

In terms of domain architecture, LisH spans 116 to 148 (SRVRLNRLVADYMMANGYHGAAALLCKDSQLEN). Residues 154–211 (IYKRYQLIHDSILQQELKEVLSWCSEHRAILKKNNSTLELEVRLQRFIELIKSKKLCQ) enclose the CTLH domain. The RING-Gid-type zinc-finger motif lies at 317–389 (CPVCTPCLND…REGFLRDPYS (73 aa)).

It belongs to the FYV10 family. Identified in the GID/CTLH complex. In the absence of stress, the complex exists as an inactive anticipatory complex (GID(Ant)), composed of Gid1, the E3 ubiquitin-ligase Gid2, Gid5, Gid8, and the RING-like subunit Gid9, awaiting a substrate receptor to form the active E3 ligase complex. When cells are shifted to glucose-containing medium, the substrate receptor Gid4 is induced and becomes part of the complex, named GID(SR4). Additionally, Gid7 transforms the GID(SR4) E3 ligase core into a higher-order supramolecular assembly (Chelator-GID(SR4)). Under osmotic or heat stress, the substrate receptor Gid10 is induced and becomes part of the complex, named GID(SR10).

The protein resides in the cytoplasm. It localises to the nucleus. The enzyme catalyses S-ubiquitinyl-[E2 ubiquitin-conjugating enzyme]-L-cysteine + [acceptor protein]-L-lysine = [E2 ubiquitin-conjugating enzyme]-L-cysteine + N(6)-ubiquitinyl-[acceptor protein]-L-lysine.. It participates in protein modification; protein ubiquitination. In terms of biological role, component of the GID E3 ligase complex recruiting N termini and catalyzing ubiquitination of proteins targeted for degradation. GID E3 is regulated through assembly with interchangeable N-degron-binding substrate receptors induced by distinct environmental perturbations. Required for the adaptation to the presence of glucose in the growth medium; mediates in association with the substrate receptor VID24/GID4 the degradation of enzymes involved in gluconeogenesis when cells are shifted to glucose-containing medium. The protein is GID complex subunit 9 (gid9) of Schizosaccharomyces pombe (strain 972 / ATCC 24843) (Fission yeast).